The chain runs to 92 residues: Large ribosomal subunit protein eL31 (92 aa).

Belongs to the eukaryotic ribosomal protein eL31 family.

This chain is Large ribosomal subunit protein eL31, found in Pyrobaculum arsenaticum (strain DSM 13514 / JCM 11321 / PZ6).